Reading from the N-terminus, the 255-residue chain is Uracil-DNA glycosylase (255 aa).

The disordered stretch occupies residues 1–20; that stretch reads MFSASTTPEQPLGLSGDATP. D99 acts as the Proton acceptor in catalysis.

It belongs to the uracil-DNA glycosylase (UDG) superfamily. UNG family.

It is found in the host nucleus. The catalysed reaction is Hydrolyzes single-stranded DNA or mismatched double-stranded DNA and polynucleotides, releasing free uracil.. Its function is as follows. Excises uracil residues from the DNA which can arise as a result of misincorporation of dUMP residues by DNA polymerase or deamination of cytosines. Therefore may reduce deleterious uracil incorporation into the viral genome, particularly in terminally differentiated cells which lack DNA repair enzymes. The chain is Uracil-DNA glycosylase from Human herpesvirus 2 (strain HG52) (HHV-2).